The primary structure comprises 559 residues: NXPE family member 3 (559 aa).

A signal peptide spans 1–30; sequence MWTNFFKLRLFCCLLAVLMVVVLVVNVTQV. N-linked (GlcNAc...) asparagine glycosylation is found at Asn-26, Asn-237, and Asn-346.

The protein belongs to the NXPE family.

It localises to the secreted. The polypeptide is NXPE family member 3 (NXPE3) (Pongo abelii (Sumatran orangutan)).